The primary structure comprises 96 residues: Cobalt transport protein CbiN (96 aa).

2 consecutive transmembrane segments (helical) span residues 4–24 (WLAA…VSAG) and 59–79 (IESL…GYYL).

The protein belongs to the CbiN family. Forms an energy-coupling factor (ECF) transporter complex composed of an ATP-binding protein (A component, CbiO), a transmembrane protein (T component, CbiQ) and 2 possible substrate-capture proteins (S components, CbiM and CbiN) of unknown stoichimetry.

Its subcellular location is the cell membrane. It participates in cofactor biosynthesis; adenosylcobalamin biosynthesis. Functionally, part of the energy-coupling factor (ECF) transporter complex CbiMNOQ involved in cobalt import. The sequence is that of Cobalt transport protein CbiN from Halobacterium salinarum (strain ATCC 29341 / DSM 671 / R1).